Reading from the N-terminus, the 660-residue chain is Bifunctional polymyxin resistance protein ArnA (660 aa).

The tract at residues 1 to 304 is formyltransferase ArnAFT; the sequence is MKTVVFAYHD…TLGLVQGSRL (304 aa). A (6R)-10-formyltetrahydrofolate-binding site is contributed by 86–88; it reads HLI. The Proton donor; for formyltransferase activity role is filled by histidine 104. (6R)-10-formyltetrahydrofolate contacts are provided by residues arginine 114 and 136–140; that span reads VKRAD. The segment at 314-660 is dehydrogenase ArnADH; sequence RRTRVLILGV…RTVDLTDKPS (347 aa). NAD(+)-binding positions include aspartate 347 and 368-369; that span reads DI. UDP-alpha-D-glucuronate is bound by residues alanine 393, tyrosine 398, and 432-433; that span reads TS. Glutamate 434 (proton acceptor; for decarboxylase activity) is an active-site residue. UDP-alpha-D-glucuronate is bound by residues arginine 460, asparagine 492, 526-535, and tyrosine 613; that span reads KLIDGGKQKR. The active-site Proton donor; for decarboxylase activity is arginine 619.

In the N-terminal section; belongs to the Fmt family. UDP-L-Ara4N formyltransferase subfamily. This sequence in the C-terminal section; belongs to the NAD(P)-dependent epimerase/dehydratase family. UDP-glucuronic acid decarboxylase subfamily. In terms of assembly, homohexamer, formed by a dimer of trimers.

The catalysed reaction is UDP-alpha-D-glucuronate + NAD(+) = UDP-beta-L-threo-pentopyranos-4-ulose + CO2 + NADH. It carries out the reaction UDP-4-amino-4-deoxy-beta-L-arabinose + (6R)-10-formyltetrahydrofolate = UDP-4-deoxy-4-formamido-beta-L-arabinose + (6S)-5,6,7,8-tetrahydrofolate + H(+). Its pathway is nucleotide-sugar biosynthesis; UDP-4-deoxy-4-formamido-beta-L-arabinose biosynthesis; UDP-4-deoxy-4-formamido-beta-L-arabinose from UDP-alpha-D-glucuronate: step 1/3. It participates in nucleotide-sugar biosynthesis; UDP-4-deoxy-4-formamido-beta-L-arabinose biosynthesis; UDP-4-deoxy-4-formamido-beta-L-arabinose from UDP-alpha-D-glucuronate: step 3/3. It functions in the pathway bacterial outer membrane biogenesis; lipopolysaccharide biosynthesis. Functionally, bifunctional enzyme that catalyzes the oxidative decarboxylation of UDP-glucuronic acid (UDP-GlcUA) to UDP-4-keto-arabinose (UDP-Ara4O) and the addition of a formyl group to UDP-4-amino-4-deoxy-L-arabinose (UDP-L-Ara4N) to form UDP-L-4-formamido-arabinose (UDP-L-Ara4FN). The modified arabinose is attached to lipid A and is required for resistance to polymyxin and cationic antimicrobial peptides. This chain is Bifunctional polymyxin resistance protein ArnA, found in Escherichia coli (strain SE11).